Here is a 210-residue protein sequence, read N- to C-terminus: Ovomucoid (210 aa).

The N-terminal stretch at 1–24 (MAMAGVFVLFSFVLCGFLPDAAFG) is a signal peptide. Kazal-like domains are found at residues 25 to 88 (AEVD…ECKE), 89 to 153 (TVPM…GCRK), and 156 to 210 (AAVS…FGKC). Cystine bridges form between cysteine 29-cysteine 68, cysteine 46-cysteine 65, and cysteine 54-cysteine 86. Asparagine 34 is a glycosylation site (N-linked (GlcNAc...) asparagine). N-linked (GlcNAc...) asparagine glycosylation is found at asparagine 77, asparagine 93, and asparagine 99. 6 cysteine pairs are disulfide-bonded: cysteine 94–cysteine 133, cysteine 111–cysteine 130, cysteine 119–cysteine 151, cysteine 162–cysteine 192, cysteine 170–cysteine 189, and cysteine 178–cysteine 210. Residue asparagine 199 is glycosylated (N-linked (GlcNAc...) asparagine; partial).

It is found in the secreted. In terms of biological role, serine protease inhibitor. Inhibits trypsin. The sequence is that of Ovomucoid from Gallus gallus (Chicken).